The sequence spans 63 residues: MQFSGVVLILISMTLVNFVFFETKVEAGKFGKCKPNICAKTCQTEKGKGMGYCNKTECVCSEW.

The first 27 residues, 1–27 (MQFSGVVLILISMTLVNFVFFETKVEA), serve as a signal peptide directing secretion. Disulfide bonds link Cys-33/Cys-53, Cys-38/Cys-58, and Cys-42/Cys-60.

Belongs to the short scorpion toxin superfamily. Potassium channel inhibitor family. Alpha-KTx 21 subfamily. As to expression, expressed by the venom gland.

Its subcellular location is the secreted. Its function is as follows. Reversibly and voltage-independently blocks voltage-gated potassium channels rKv1.2/KCNA2 (73%) (IC(50)=196 nM), hKv1.3/KCNA3 (50%) (IC(50)=508 nM), Shaker IR (30%), rKv1.6/KCNA6 (22%) (at 0.5 uM). Interaction of Ts15 with Kv1.3/KCNA3 is stronger than its interaction with Kv1.2/KCNA2. This Tityus serrulatus (Brazilian scorpion) protein is Potassium channel toxin alpha-KTx 21.1.